Consider the following 262-residue polypeptide: Hydroxyethylthiazole kinase (262 aa).

Residue M50 participates in substrate binding. ATP contacts are provided by R125 and T171. G198 contacts substrate.

This sequence belongs to the Thz kinase family. The cofactor is Mg(2+).

It catalyses the reaction 5-(2-hydroxyethyl)-4-methylthiazole + ATP = 4-methyl-5-(2-phosphooxyethyl)-thiazole + ADP + H(+). It functions in the pathway cofactor biosynthesis; thiamine diphosphate biosynthesis; 4-methyl-5-(2-phosphoethyl)-thiazole from 5-(2-hydroxyethyl)-4-methylthiazole: step 1/1. Its function is as follows. Catalyzes the phosphorylation of the hydroxyl group of 4-methyl-5-beta-hydroxyethylthiazole (THZ). This Escherichia coli O6:H1 (strain CFT073 / ATCC 700928 / UPEC) protein is Hydroxyethylthiazole kinase.